The primary structure comprises 421 residues: UDP-N-acetylglucosamine 1-carboxyvinyltransferase (421 aa).

22–23 (KN) serves as a coordination point for phosphoenolpyruvate. Position 93 (Arg-93) interacts with UDP-N-acetyl-alpha-D-glucosamine. Cys-117 acts as the Proton donor in catalysis. 2-(S-cysteinyl)pyruvic acid O-phosphothioketal is present on Cys-117. Residues 122–126 (RPVDL), Asp-308, and Val-330 each bind UDP-N-acetyl-alpha-D-glucosamine.

The protein belongs to the EPSP synthase family. MurA subfamily.

It localises to the cytoplasm. It catalyses the reaction phosphoenolpyruvate + UDP-N-acetyl-alpha-D-glucosamine = UDP-N-acetyl-3-O-(1-carboxyvinyl)-alpha-D-glucosamine + phosphate. Its pathway is cell wall biogenesis; peptidoglycan biosynthesis. In terms of biological role, cell wall formation. Adds enolpyruvyl to UDP-N-acetylglucosamine. The protein is UDP-N-acetylglucosamine 1-carboxyvinyltransferase of Azotobacter vinelandii (strain DJ / ATCC BAA-1303).